Reading from the N-terminus, the 358-residue chain is D-alanine--D-alanine ligase B (358 aa).

The 206-residue stretch at 147–352 folds into the ATP-grasp domain; the sequence is KYVLENFKFK…YSALIDELIE (206 aa). Position 179 to 234 (179 to 234) interacts with ATP; sequence VEKLQYDVFIKPANSGSSVGITKAHNKEELLKGLEEAFIHDKNVLVEEAINAREIE. Mg(2+)-binding residues include Asp305, Glu319, and Asn321.

The protein belongs to the D-alanine--D-alanine ligase family. It depends on Mg(2+) as a cofactor. Requires Mn(2+) as cofactor.

The protein localises to the cytoplasm. The enzyme catalyses 2 D-alanine + ATP = D-alanyl-D-alanine + ADP + phosphate + H(+). It functions in the pathway cell wall biogenesis; peptidoglycan biosynthesis. Functionally, cell wall formation. This chain is D-alanine--D-alanine ligase B, found in Clostridium tetani (strain Massachusetts / E88).